Reading from the N-terminus, the 248-residue chain is Adenosylcobinamide-GDP ribazoletransferase (248 aa).

The next 5 membrane-spanning stretches (helical) occupy residues 30 to 50, 54 to 74, 112 to 132, 134 to 154, and 188 to 208; these read LAES…CYAL, VLSG…LTAV, FGAL…DAVI, AGSF…MVLA, and AVSA…LAAG.

Belongs to the CobS family. Requires Mg(2+) as cofactor.

The protein localises to the cell inner membrane. The catalysed reaction is alpha-ribazole + adenosylcob(III)inamide-GDP = adenosylcob(III)alamin + GMP + H(+). It catalyses the reaction alpha-ribazole 5'-phosphate + adenosylcob(III)inamide-GDP = adenosylcob(III)alamin 5'-phosphate + GMP + H(+). It functions in the pathway cofactor biosynthesis; adenosylcobalamin biosynthesis; adenosylcobalamin from cob(II)yrinate a,c-diamide: step 7/7. In terms of biological role, joins adenosylcobinamide-GDP and alpha-ribazole to generate adenosylcobalamin (Ado-cobalamin). Also synthesizes adenosylcobalamin 5'-phosphate from adenosylcobinamide-GDP and alpha-ribazole 5'-phosphate. In Syntrophobacter fumaroxidans (strain DSM 10017 / MPOB), this protein is Adenosylcobinamide-GDP ribazoletransferase.